Consider the following 278-residue polypeptide: 2-dehydro-3-deoxyphosphooctonate aldolase (278 aa).

Belongs to the KdsA family.

The protein resides in the cytoplasm. The enzyme catalyses D-arabinose 5-phosphate + phosphoenolpyruvate + H2O = 3-deoxy-alpha-D-manno-2-octulosonate-8-phosphate + phosphate. It functions in the pathway carbohydrate biosynthesis; 3-deoxy-D-manno-octulosonate biosynthesis; 3-deoxy-D-manno-octulosonate from D-ribulose 5-phosphate: step 2/3. It participates in bacterial outer membrane biogenesis; lipopolysaccharide biosynthesis. The protein is 2-dehydro-3-deoxyphosphooctonate aldolase of Dechloromonas aromatica (strain RCB).